The chain runs to 309 residues: tRNA uridine(34) hydroxylase (309 aa).

Residues 129–223 enclose the Rhodanese domain; it reads SEPGTIVIDT…YLEEVPAEQS (95 aa). C183 (cysteine persulfide intermediate) is an active-site residue. The segment at 288–309 is disordered; it reads YAERQRQVELAQARGKRPHIGS.

The protein belongs to the TrhO family.

The catalysed reaction is uridine(34) in tRNA + AH2 + O2 = 5-hydroxyuridine(34) in tRNA + A + H2O. Catalyzes oxygen-dependent 5-hydroxyuridine (ho5U) modification at position 34 in tRNAs. The chain is tRNA uridine(34) hydroxylase from Mesorhizobium japonicum (strain LMG 29417 / CECT 9101 / MAFF 303099) (Mesorhizobium loti (strain MAFF 303099)).